A 631-amino-acid chain; its full sequence is Vacuolar-sorting receptor 6 (631 aa).

The N-terminal stretch at methionine 1 to glycine 25 is a signal peptide. Over arginine 26–glycine 563 the chain is Lumenal. The region spanning asparagine 57–leucine 165 is the PA domain. N-linked (GlcNAc...) asparagine glycosylation is found at asparagine 294 and asparagine 431. 2 EGF-like domains span residues glutamate 413–glutamate 463 and glutamate 494–lysine 540. 5 disulfides stabilise this stretch: cysteine 417-cysteine 435, cysteine 424-cysteine 444, cysteine 446-cysteine 462, cysteine 498-cysteine 511, and cysteine 530-cysteine 539. A helical transmembrane segment spans residues tryptophan 564–phenylalanine 584. Residues tyrosine 585–alanine 631 are Cytoplasmic-facing. Residues tyrosine 604–leucine 607 carry the Tyrosine-based internalization motif motif. Residues glutamine 610–alanine 631 are disordered.

Belongs to the VSR (BP-80) family. In terms of tissue distribution, expressed in seedlings, roots, leaves, flowers and siliques.

It localises to the membrane. The protein resides in the golgi apparatus membrane. The protein localises to the cytoplasmic vesicle. Its subcellular location is the clathrin-coated vesicle membrane. It is found in the prevacuolar compartment membrane. Its function is as follows. Vacuolar-sorting receptor (VSR) involved in clathrin-coated vesicles sorting from Golgi apparatus to vacuoles. The protein is Vacuolar-sorting receptor 6 (VSR6) of Arabidopsis thaliana (Mouse-ear cress).